Consider the following 247-residue polypeptide: Osmotin-like protein OSML81 (247 aa).

Positions 1 to 21 (MGYLRSSFIFSLLAFVTYTYA) are cleaved as a signal peptide. Disulfide bonds link cysteine 30–cysteine 225, cysteine 72–cysteine 82, cysteine 87–cysteine 93, cysteine 141–cysteine 213, cysteine 146–cysteine 196, cysteine 154–cysteine 164, cysteine 168–cysteine 177, and cysteine 178–cysteine 183.

It belongs to the thaumatin family.

This chain is Osmotin-like protein OSML81, found in Solanum commersonii (Commerson's wild potato).